We begin with the raw amino-acid sequence, 117 residues long: Ubiquitin-like protein 3 (117 aa).

Residues 10–88 (INLRLILVSG…PFGKTTVMHL (79 aa)) enclose the Ubiquitin-like domain. Residue Cys-113 is the site of S-palmitoyl cysteine attachment. Cys-114 carries the post-translational modification Cysteine methyl ester. Cys-114 is lipidated: S-geranylgeranyl cysteine. A propeptide spans 115-117 (VIL) (removed in mature form).

It localises to the cell membrane. The chain is Ubiquitin-like protein 3 (UBL3) from Bos taurus (Bovine).